Here is a 252-residue protein sequence, read N- to C-terminus: 14-3-3 protein 10 (252 aa).

Belongs to the 14-3-3 family. Homodimer.

The protein is 14-3-3 protein 10 (TFT10) of Solanum lycopersicum (Tomato).